A 264-amino-acid chain; its full sequence is 14-3-3 protein homolog (264 aa).

The span at 236–258 (SEAPAATEEQQQSSQAPAAQPTE) shows a compositional bias: low complexity. A disordered region spans residues 236–264 (SEAPAATEEQQQSSQAPAAQPTEGKADQE).

This sequence belongs to the 14-3-3 family.

In Candida albicans (strain SC5314 / ATCC MYA-2876) (Yeast), this protein is 14-3-3 protein homolog (BMH1).